A 201-amino-acid chain; its full sequence is 3-isopropylmalate dehydratase small subunit (201 aa).

Belongs to the LeuD family. LeuD type 1 subfamily. In terms of assembly, heterodimer of LeuC and LeuD.

The catalysed reaction is (2R,3S)-3-isopropylmalate = (2S)-2-isopropylmalate. It participates in amino-acid biosynthesis; L-leucine biosynthesis; L-leucine from 3-methyl-2-oxobutanoate: step 2/4. Catalyzes the isomerization between 2-isopropylmalate and 3-isopropylmalate, via the formation of 2-isopropylmaleate. This Rhodopseudomonas palustris (strain HaA2) protein is 3-isopropylmalate dehydratase small subunit.